The chain runs to 272 residues: Protein UL11 (272 aa).

The first 31 residues, 1-31, serve as a signal peptide directing secretion; that stretch reads MLFRYITFHREKVLYLTAACIFGVYISLHDA. Residues 32–224 are Extracellular-facing; the sequence is CIPVVGKIGT…PLQPSPQHQH (193 aa). 4 N-linked (GlcNAc...) asparagine; by host glycosylation sites follow: N42, N93, N100, and N142. The segment at 142–200 is disordered; it reads NGTFPTTTTKKPTTTTRTTTTTTQRTTTTRTTTTAKKTTISTTHHKHPSPKKSTTPNSH. The segment covering 147–183 has biased composition (low complexity); it reads TTTTKKPTTTTRTTTTTTQRTTTTRTTTTAKKTTIST. Residues 225–245 traverse the membrane as a helical segment; sequence LATHALWVLAVVIVIIIIIIF. Over 246–272 the chain is Cytoplasmic; that stretch reads YFRIPQKLWLLWQHDKHGIVLIPQTDL.

This sequence belongs to the RL11 family. Interacts with host PTPRC; this interaction affects T-cell signaling. Glycosylated.

It localises to the host cell membrane. Its subcellular location is the host endoplasmic reticulum. In terms of biological role, plays a role in the modulation of host immune response by modulating T-cell function. Interacts with host PTPRC/CD45 and thereby reduces host TCR signaling and T-cell proliferation. The chain is Protein UL11 (UL11) from Human cytomegalovirus (strain Merlin) (HHV-5).